We begin with the raw amino-acid sequence, 476 residues long: Glycogen synthase (476 aa).

Lys15 contributes to the ADP-alpha-D-glucose binding site.

This sequence belongs to the glycosyltransferase 1 family. Bacterial/plant glycogen synthase subfamily.

The catalysed reaction is [(1-&gt;4)-alpha-D-glucosyl](n) + ADP-alpha-D-glucose = [(1-&gt;4)-alpha-D-glucosyl](n+1) + ADP + H(+). The protein operates within glycan biosynthesis; glycogen biosynthesis. Synthesizes alpha-1,4-glucan chains using ADP-glucose. This is Glycogen synthase from Streptococcus sanguinis (strain SK36).